Consider the following 413-residue polypeptide: Zinc finger protein 821 (413 aa).

The segment at 26–83 (RQAMMKTDFPGDLGSQRQAIQQLRDQDSSSSDSEGDEEETTQDEVSSHTSEEDGGVVK) is disordered. Over residues 58 to 67 (SEGDEEETTQ) the composition is skewed to acidic residues. C2H2-type zinc fingers lie at residues 117–141 (QLCQ…VYQH) and 151–173 (YMCP…LLIH). Residues 260 to 367 (ALRRQNEPLE…EKMDMMLRAQ (108 aa)) adopt a coiled-coil conformation. The segment at 279–320 (RTAKKSRRDNETPEEREVRRMRDREAKRLQRMQETDEQRARR) is disordered.

Belongs to the krueppel C2H2-type zinc-finger protein family.

It is found in the nucleus. May be involved in transcriptional regulation. The protein is Zinc finger protein 821 (Znf821) of Mus musculus (Mouse).